The chain runs to 561 residues: DNA ligase B (561 aa).

Lys-125 acts as the N6-AMP-lysine intermediate in catalysis.

It belongs to the NAD-dependent DNA ligase family. LigB subfamily.

It catalyses the reaction NAD(+) + (deoxyribonucleotide)n-3'-hydroxyl + 5'-phospho-(deoxyribonucleotide)m = (deoxyribonucleotide)n+m + AMP + beta-nicotinamide D-nucleotide.. Its function is as follows. Catalyzes the formation of phosphodiester linkages between 5'-phosphoryl and 3'-hydroxyl groups in double-stranded DNA using NAD as a coenzyme and as the energy source for the reaction. The protein is DNA ligase B of Salmonella choleraesuis (strain SC-B67).